Consider the following 359-residue polypeptide: Phosphate acyltransferase (359 aa).

The protein belongs to the PlsX family. Homodimer. Probably interacts with PlsY.

Its subcellular location is the cytoplasm. It carries out the reaction a fatty acyl-[ACP] + phosphate = an acyl phosphate + holo-[ACP]. It functions in the pathway lipid metabolism; phospholipid metabolism. Functionally, catalyzes the reversible formation of acyl-phosphate (acyl-PO(4)) from acyl-[acyl-carrier-protein] (acyl-ACP). This enzyme utilizes acyl-ACP as fatty acyl donor, but not acyl-CoA. In Salmonella heidelberg (strain SL476), this protein is Phosphate acyltransferase.